The primary structure comprises 310 residues: tRNA dimethylallyltransferase (310 aa).

Position 14–21 (14–21) interacts with ATP; it reads GPTASGKS. Position 16-21 (16-21) interacts with substrate; sequence TASGKS. Interaction with substrate tRNA stretches follow at residues 39-42 and 163-167; these read DSMQ and QRIVR.

Belongs to the IPP transferase family. As to quaternary structure, monomer. Requires Mg(2+) as cofactor.

The enzyme catalyses adenosine(37) in tRNA + dimethylallyl diphosphate = N(6)-dimethylallyladenosine(37) in tRNA + diphosphate. Catalyzes the transfer of a dimethylallyl group onto the adenine at position 37 in tRNAs that read codons beginning with uridine, leading to the formation of N6-(dimethylallyl)adenosine (i(6)A). In Brucella ovis (strain ATCC 25840 / 63/290 / NCTC 10512), this protein is tRNA dimethylallyltransferase.